The following is a 224-amino-acid chain: Menaquinol:cytochrome c reductase cytochrome b subunit (224 aa).

The helical transmembrane segment at 37 to 57 threads the bilayer; it reads FSAFVYCFGGLTFFVTVIQVL. A heme b-binding site is contributed by Tyr42. Position 43 (Cys43) interacts with heme c. Heme b is bound by residues Arg91, His94, His108, and Arg111. Transmembrane regions (helical) follow at residues 96 to 116, 126 to 146, and 195 to 215; these read WGAS…FFQG, WIVG…GYLL, and IHVF…FIMI. Heme b-binding residues include His196 and His211. Positions 216 and 220 each coordinate heme c. Ser221 contacts heme b.

This sequence belongs to the cytochrome b family. In terms of assembly, the main subunits of the menaquinol:cytochrome c complex are a Rieske-type iron-sulfur protein (QcrA), a cytochrome b (QcrB) and a cytochrome c (QcrC). Heme b is required as a cofactor. Requires heme c as cofactor.

It localises to the cell membrane. Its function is as follows. Component of the menaquinol:cytochrome c reductase complex. The sequence is that of Menaquinol:cytochrome c reductase cytochrome b subunit from Bacillus subtilis (strain 168).